A 139-amino-acid chain; its full sequence is Nuclear receptor 2C2-associated protein (139 aa).

This sequence belongs to the NR2C2AP family. In terms of assembly, interacts with NR2C2/TR4. As to expression, expressed in all tissues examined, with highest expression in heart, skeletal muscle and pancreas.

Its subcellular location is the nucleus. Its function is as follows. May act as a repressor of NR2C2-mediated transactivation by suppressing the binding between NR2C2/TR4 and the TR4-response element in target genes. This chain is Nuclear receptor 2C2-associated protein (NR2C2AP), found in Homo sapiens (Human).